The following is a 147-amino-acid chain: Large ribosomal subunit protein uL13 (147 aa).

The interval 128-147 (DQHPHGAQQPQPFEITQVAQ) is disordered.

The protein belongs to the universal ribosomal protein uL13 family. Part of the 50S ribosomal subunit.

This protein is one of the early assembly proteins of the 50S ribosomal subunit, although it is not seen to bind rRNA by itself. It is important during the early stages of 50S assembly. This is Large ribosomal subunit protein uL13 from Streptomyces coelicolor (strain ATCC BAA-471 / A3(2) / M145).